A 705-amino-acid chain; its full sequence is Lethal(3)malignant brain tumor-like protein 2 (705 aa).

Positions 1-84 are disordered; the sequence is MEKPPSIEET…GTPRSLDGSG (84 aa). S13 is modified (phosphoserine). Positions 15–25 are enriched in acidic residues; the sequence is PMEEEEDDDLE. Positions 38 to 49 are enriched in low complexity; it reads SSVGSESSSYLE. Residues 50–60 show a composition bias toward acidic residues; it reads ESSEAENEDRE. S67 carries the phosphoserine modification. At T76 the chain carries Phosphothreonine. The segment at 81–116 adopts an FCS-type zinc-finger fold; that stretch reads DGSGSEPAVCEMCGIVGTREAFFSKTKRFCSVSCSR. C90, C93, C110, and C114 together coordinate Zn(2+). MBT repeat units lie at residues 179–283, 291–391, 397–500, and 508–604; these read FDWG…LVPP, TDWK…IKMS, MAHH…LTPP, and FNWE…LQPP. Position 338 is a phosphoserine (S338). K405 is covalently cross-linked (Glycyl lysine isopeptide (Lys-Gly) (interchain with G-Cter in SUMO2)). Positions 608–705 are disordered; sequence EPATPLKAKE…VENIKQETDD (98 aa). The segment covering 619–634 has biased composition (basic residues); the sequence is TKKKKKQFGKKRKRIP. Residues K647, K659, and K675 each participate in a glycyl lysine isopeptide (Lys-Gly) (interchain with G-Cter in SUMO2) cross-link. Phosphoserine is present on residues S683, S688, and S689. K700 is covalently cross-linked (Glycyl lysine isopeptide (Lys-Gly) (interchain with G-Cter in SUMO1); alternate). A Glycyl lysine isopeptide (Lys-Gly) (interchain with G-Cter in SUMO2); alternate cross-link involves residue K700.

Part of the E2F6.com-1 complex in G0 phase composed of E2F6, MGA, MAX, TFDP1, CBX3, BAT8, EUHMTASE1, RING1, RNF2, MBLR, BAT8 and YAF2.

Its subcellular location is the nucleus. Putative Polycomb group (PcG) protein. PcG proteins maintain the transcriptionally repressive state of genes, probably via a modification of chromatin, rendering it heritably changed in its expressibility. Its association with a chromatin-remodeling complex suggests that it may contribute to prevent expression of genes that trigger the cell into mitosis. Binds to monomethylated and dimethylated 'Lys-20' on histone H4. Binds histone H3 peptides that are monomethylated or dimethylated on 'Lys-4', 'Lys-9' or 'Lys-27'. This is Lethal(3)malignant brain tumor-like protein 2 (L3MBTL2) from Pongo abelii (Sumatran orangutan).